We begin with the raw amino-acid sequence, 183 residues long: Inner membrane-spanning protein YciB (183 aa).

5 consecutive transmembrane segments (helical) span residues 4-24, 50-70, 72-92, 119-139, and 149-169; these read FIEF…DIYM, MQLF…FFHD, TFIK…LLIS, VNLG…YVAF, and FKVF…GVYL.

This sequence belongs to the YciB family.

The protein resides in the cell inner membrane. Its function is as follows. Plays a role in cell envelope biogenesis, maintenance of cell envelope integrity and membrane homeostasis. The chain is Inner membrane-spanning protein YciB from Aeromonas hydrophila subsp. hydrophila (strain ATCC 7966 / DSM 30187 / BCRC 13018 / CCUG 14551 / JCM 1027 / KCTC 2358 / NCIMB 9240 / NCTC 8049).